The chain runs to 293 residues: 4-diphosphocytidyl-2-C-methyl-D-erythritol kinase (293 aa).

Lysine 10 is a catalytic residue. Position 94–104 (94–104) interacts with ATP; sequence PVSAGLAGGSS. Residue aspartate 136 is part of the active site.

It belongs to the GHMP kinase family. IspE subfamily.

It catalyses the reaction 4-CDP-2-C-methyl-D-erythritol + ATP = 4-CDP-2-C-methyl-D-erythritol 2-phosphate + ADP + H(+). Its pathway is isoprenoid biosynthesis; isopentenyl diphosphate biosynthesis via DXP pathway; isopentenyl diphosphate from 1-deoxy-D-xylulose 5-phosphate: step 3/6. Its function is as follows. Catalyzes the phosphorylation of the position 2 hydroxy group of 4-diphosphocytidyl-2C-methyl-D-erythritol. This chain is 4-diphosphocytidyl-2-C-methyl-D-erythritol kinase, found in Listeria monocytogenes serotype 4b (strain CLIP80459).